Reading from the N-terminus, the 166-residue chain is MSKLNDKHERVRARVREAFILFEHKEGSRLVDFKDVPTAVRACGVNPTAVQMTHILDQLAALNAETDATGYVGLENFELVVCNFLIQQEASLFRDDYHTLLRAFRAFDPDGRGFIDAESFKSLLTGKGEALSEDELAKMMTVAADGEGKIWYEDYAQRLANDGRTI.

In terms of domain architecture, EF-hand spans 95–130 (DDYHTLLRAFRAFDPDGRGFIDAESFKSLLTGKGEA).

Belongs to the DRC8 family. As to quaternary structure, component of the nexin-dynein regulatory complex (N-DRC).

Its subcellular location is the cytoplasm. The protein resides in the cytoskeleton. It is found in the flagellum axoneme. Component of the nexin-dynein regulatory complex (N-DRC), a key regulator of ciliary/flagellar motility which maintains the alignment and integrity of the distal axoneme and regulates microtubule sliding in motile axonemes. The chain is Dynein regulatory complex protein 8 from Chlamydomonas reinhardtii (Chlamydomonas smithii).